A 1197-amino-acid polypeptide reads, in one-letter code: ATP-dependent helicase/nuclease subunit A (1197 aa).

The 457-residue stretch at 2–458 (RQWTKEQQAA…IDLAKNFRSR (457 aa)) folds into the UvrD-like helicase ATP-binding domain. 23–30 (AAAGSGKT) contacts ATP. Residues 485-774 (RAALYQGTEF…RIMSIHKSKG (290 aa)) enclose the UvrD-like helicase C-terminal domain.

The protein belongs to the helicase family. AddA subfamily. Heterodimer of AddA and AddB/RexB. Mg(2+) serves as cofactor.

It carries out the reaction Couples ATP hydrolysis with the unwinding of duplex DNA by translocating in the 3'-5' direction.. It catalyses the reaction ATP + H2O = ADP + phosphate + H(+). Functionally, the heterodimer acts as both an ATP-dependent DNA helicase and an ATP-dependent, dual-direction single-stranded exonuclease. Recognizes the chi site generating a DNA molecule suitable for the initiation of homologous recombination. The AddA nuclease domain is required for chi fragment generation; this subunit has the helicase and 3' -&gt; 5' nuclease activities. In Alkaliphilus oremlandii (strain OhILAs) (Clostridium oremlandii (strain OhILAs)), this protein is ATP-dependent helicase/nuclease subunit A.